The chain runs to 276 residues: Mitochondrial outer membrane protein porin of 36 kDa (276 aa).

This sequence belongs to the eukaryotic mitochondrial porin (TC 1.B.8.1) family.

It localises to the mitochondrion outer membrane. In terms of biological role, forms a channel through the cell membrane that allows diffusion of small hydrophilic molecules. The channel adopts an open conformation at low or zero membrane potential and a closed conformation at potentials above 30-40 mV. The open state has a weak anion selectivity whereas the closed state is cation-selective. The sequence is that of Mitochondrial outer membrane protein porin of 36 kDa from Solanum tuberosum (Potato).